The sequence spans 638 residues: DNA gyrase subunit B (638 aa).

The Toprim domain maps to 422-536; that stretch reads SELYIVEGDS…NGYVYIAQPP (115 aa). The Mg(2+) site is built by glutamate 428, aspartate 501, and aspartate 503.

Belongs to the type II topoisomerase GyrB family. Heterotetramer, composed of two GyrA and two GyrB chains. In the heterotetramer, GyrA contains the active site tyrosine that forms a transient covalent intermediate with DNA, while GyrB binds cofactors and catalyzes ATP hydrolysis. The cofactor is Mg(2+). Requires Mn(2+) as cofactor. Ca(2+) serves as cofactor.

It localises to the cytoplasm. The catalysed reaction is ATP-dependent breakage, passage and rejoining of double-stranded DNA.. Functionally, a type II topoisomerase that negatively supercoils closed circular double-stranded (ds) DNA in an ATP-dependent manner to modulate DNA topology and maintain chromosomes in an underwound state. Negative supercoiling favors strand separation, and DNA replication, transcription, recombination and repair, all of which involve strand separation. Also able to catalyze the interconversion of other topological isomers of dsDNA rings, including catenanes and knotted rings. Type II topoisomerases break and join 2 DNA strands simultaneously in an ATP-dependent manner. The polypeptide is DNA gyrase subunit B (Bacillus subtilis (strain 168)).